A 174-amino-acid chain; its full sequence is Protein C2-DOMAIN ABA-RELATED 6 (174 aa).

Residues 1-115 form the C2 domain; it reads MEKTEEEVEM…HKLGLKELPH (115 aa). Ca(2+) is bound by residues R30, D31, D36, D82, K83, D84, and D90.

This sequence belongs to the plant CAR protein family. As to quaternary structure, binds to PYR/PYL/RCAR abscisic acid intracellular receptors in an ABA-independent manner, both at the plasma membrane and in the nucleus. Subunit of a complex made of CAR6, PHOT1 and RPT3/NPH3. Interacts directly with RPT3/NPH3.

It localises to the cell membrane. The protein resides in the nucleus. Its function is as follows. Stimulates the GTPase/ATPase activities of Obg-like ATPases. Mediates the transient calcium-dependent interaction of PYR/PYL/RCAR abscisic acid (ABA) receptors with the plasma membrane and thus regulates ABA sensitivity. Prevents hypocotyl bending as well as gravitropic response under blue light conditions. This Arabidopsis thaliana (Mouse-ear cress) protein is Protein C2-DOMAIN ABA-RELATED 6.